Reading from the N-terminus, the 80-residue chain is RNA-binding protein KhpA (80 aa).

In terms of domain architecture, KH spans 33-80; sequence LEILQLRVASEDVGKVIGKHGRIARALRTLLSASAHASQTRYALEIID.

Belongs to the KhpA RNA-binding protein family. As to quaternary structure, forms a complex with KhpB.

The protein localises to the cytoplasm. A probable RNA chaperone. Forms a complex with KhpB which binds to cellular RNA and controls its expression. Plays a role in peptidoglycan (PG) homeostasis and cell length regulation. This is RNA-binding protein KhpA from Treponema pallidum (strain Nichols).